The primary structure comprises 394 residues: S-adenosylmethionine synthase (394 aa).

Histidine 16 is a binding site for ATP. Aspartate 18 lines the Mg(2+) pocket. K(+) is bound at residue glutamate 44. Residues glutamate 57 and glutamine 99 each coordinate L-methionine. The flexible loop stretch occupies residues 99–109 (QSPDIAQGVDE). ATP contacts are provided by residues 173 to 175 (DAK), 240 to 241 (RF), aspartate 249, 255 to 256 (RK), alanine 272, and lysine 276. Aspartate 249 lines the L-methionine pocket. Position 280 (lysine 280) interacts with L-methionine.

This sequence belongs to the AdoMet synthase family. As to quaternary structure, homotetramer; dimer of dimers. Mg(2+) is required as a cofactor. Requires K(+) as cofactor.

The protein localises to the cytoplasm. It catalyses the reaction L-methionine + ATP + H2O = S-adenosyl-L-methionine + phosphate + diphosphate. Its pathway is amino-acid biosynthesis; S-adenosyl-L-methionine biosynthesis; S-adenosyl-L-methionine from L-methionine: step 1/1. Its function is as follows. Catalyzes the formation of S-adenosylmethionine (AdoMet) from methionine and ATP. The overall synthetic reaction is composed of two sequential steps, AdoMet formation and the subsequent tripolyphosphate hydrolysis which occurs prior to release of AdoMet from the enzyme. This chain is S-adenosylmethionine synthase, found in Lacticaseibacillus paracasei (strain ATCC 334 / BCRC 17002 / CCUG 31169 / CIP 107868 / KCTC 3260 / NRRL B-441) (Lactobacillus paracasei).